A 696-amino-acid chain; its full sequence is DNA ligase (696 aa).

NAD(+) contacts are provided by residues 36-40 (DAVYD), 85-86 (SL), and E124. The N6-AMP-lysine intermediate role is filled by K126. Residues R147, E184, K308, and K332 each contribute to the NAD(+) site. Zn(2+) contacts are provided by C426, C429, C444, and C449. In terms of domain architecture, BRCT spans 618-696 (QRTVSLQGQT…EEELLKLLAS (79 aa)).

Belongs to the NAD-dependent DNA ligase family. LigA subfamily. Requires Mg(2+) as cofactor. Mn(2+) is required as a cofactor.

The catalysed reaction is NAD(+) + (deoxyribonucleotide)n-3'-hydroxyl + 5'-phospho-(deoxyribonucleotide)m = (deoxyribonucleotide)n+m + AMP + beta-nicotinamide D-nucleotide.. Functionally, DNA ligase that catalyzes the formation of phosphodiester linkages between 5'-phosphoryl and 3'-hydroxyl groups in double-stranded DNA using NAD as a coenzyme and as the energy source for the reaction. It is essential for DNA replication and repair of damaged DNA. The protein is DNA ligase of Prochlorococcus marinus (strain MIT 9303).